Reading from the N-terminus, the 205-residue chain is Outer-membrane lipoprotein LolB (205 aa).

An N-terminal signal peptide occupies residues 1–17; it reads MFLRHVIVFSLIALLTG. Cysteine 18 is lipidated: N-palmitoyl cysteine. Cysteine 18 carries the S-diacylglycerol cysteine lipid modification.

The protein belongs to the LolB family. As to quaternary structure, monomer.

The protein localises to the cell outer membrane. Plays a critical role in the incorporation of lipoproteins in the outer membrane after they are released by the LolA protein. This chain is Outer-membrane lipoprotein LolB, found in Pseudomonas syringae pv. syringae (strain B728a).